Here is a 295-residue protein sequence, read N- to C-terminus: Indole-3-glycerol phosphate synthase (295 aa).

Belongs to the TrpC family.

The enzyme catalyses 1-(2-carboxyphenylamino)-1-deoxy-D-ribulose 5-phosphate + H(+) = (1S,2R)-1-C-(indol-3-yl)glycerol 3-phosphate + CO2 + H2O. It functions in the pathway amino-acid biosynthesis; L-tryptophan biosynthesis; L-tryptophan from chorismate: step 4/5. In Prochlorococcus marinus (strain MIT 9215), this protein is Indole-3-glycerol phosphate synthase.